Here is a 91-residue protein sequence, read N- to C-terminus: DNA-directed RNA polymerase subunit omega (91 aa).

This sequence belongs to the RNA polymerase subunit omega family. The RNAP catalytic core consists of 2 alpha, 1 beta, 1 beta' and 1 omega subunit. When a sigma factor is associated with the core the holoenzyme is formed, which can initiate transcription.

The enzyme catalyses RNA(n) + a ribonucleoside 5'-triphosphate = RNA(n+1) + diphosphate. Promotes RNA polymerase assembly. Latches the N- and C-terminal regions of the beta' subunit thereby facilitating its interaction with the beta and alpha subunits. This Shigella flexneri protein is DNA-directed RNA polymerase subunit omega.